The primary structure comprises 105 residues: MKICKACSSCMVRTYVDGNIIFRCSCGESVQGDSQNLLVSSKVYHTGEMEDKYKIFIKNAPFDPTNCQIKKDCPNCHLDYLTQICIGSQKIIILVCRCGYMSNRG.

This sequence belongs to the asfivirus C122R family.

The protein localises to the virion. This is an uncharacterized protein from African swine fever virus (strain Badajoz 1971 Vero-adapted) (Ba71V).